The primary structure comprises 381 residues: 1-deoxy-D-xylulose 5-phosphate reductoisomerase (381 aa).

NADPH is bound by residues Thr-10, Gly-11, Ser-12, Ile-13, Asn-38, and Asn-121. A 1-deoxy-D-xylulose 5-phosphate-binding site is contributed by Lys-122. NADPH is bound at residue Glu-123. A Mn(2+)-binding site is contributed by Asp-147. 4 residues coordinate 1-deoxy-D-xylulose 5-phosphate: Ser-148, Glu-149, Ser-173, and His-196. Mn(2+) is bound at residue Glu-149. NADPH is bound at residue Gly-202. Ser-209, Asn-214, Lys-215, and Glu-218 together coordinate 1-deoxy-D-xylulose 5-phosphate. Glu-218 lines the Mn(2+) pocket.

It belongs to the DXR family. Mg(2+) is required as a cofactor. Requires Mn(2+) as cofactor.

It carries out the reaction 2-C-methyl-D-erythritol 4-phosphate + NADP(+) = 1-deoxy-D-xylulose 5-phosphate + NADPH + H(+). It functions in the pathway isoprenoid biosynthesis; isopentenyl diphosphate biosynthesis via DXP pathway; isopentenyl diphosphate from 1-deoxy-D-xylulose 5-phosphate: step 1/6. Catalyzes the NADPH-dependent rearrangement and reduction of 1-deoxy-D-xylulose-5-phosphate (DXP) to 2-C-methyl-D-erythritol 4-phosphate (MEP). The sequence is that of 1-deoxy-D-xylulose 5-phosphate reductoisomerase from Alkaliphilus oremlandii (strain OhILAs) (Clostridium oremlandii (strain OhILAs)).